The primary structure comprises 251 residues: ATP synthase subunit a, chloroplastic (251 aa).

6 helical membrane passes run 3–23, 38–58, 99–119, 138–158, 203–223, and 224–244; these read IVLLYYFVNMFISGIFQIANV, IHGQVLINSWIVILIIGFLSI, VPYIGTMFLFIFVSNWSGALI, INTTAGLAILTSLAYFYAGLN, LVVAVLVSLVPLIVPVPLIFL, and GLFTSGIQALIFATLSGSYIG.

It belongs to the ATPase A chain family. In terms of assembly, F-type ATPases have 2 components, CF(1) - the catalytic core - and CF(0) - the membrane proton channel. CF(1) has five subunits: alpha(3), beta(3), gamma(1), delta(1), epsilon(1). CF(0) has four main subunits: a, b, b' and c.

It localises to the plastid. The protein resides in the chloroplast thylakoid membrane. In terms of biological role, key component of the proton channel; it plays a direct role in the translocation of protons across the membrane. The chain is ATP synthase subunit a, chloroplastic from Euglena gracilis.